A 206-amino-acid polypeptide reads, in one-letter code: LexA repressor (206 aa).

Residues 28–48 constitute a DNA-binding region (H-T-H motif); that stretch reads RAEIARELGFRSANAAEEHLK. Catalysis depends on for autocatalytic cleavage activity residues Ser-123 and Lys-160.

The protein belongs to the peptidase S24 family. As to quaternary structure, homodimer.

It catalyses the reaction Hydrolysis of Ala-|-Gly bond in repressor LexA.. Represses a number of genes involved in the response to DNA damage (SOS response), including recA and lexA. In the presence of single-stranded DNA, RecA interacts with LexA causing an autocatalytic cleavage which disrupts the DNA-binding part of LexA, leading to derepression of the SOS regulon and eventually DNA repair. The protein is LexA repressor of Vibrio atlanticus (strain LGP32) (Vibrio splendidus (strain Mel32)).